The primary structure comprises 557 residues: 2-isopropylmalate synthase (557 aa).

Residues P33–D307 enclose the Pyruvate carboxyltransferase domain. The Mg(2+) site is built by D42, H246, H248, and N282. The segment at A439–A557 is regulatory domain.

It belongs to the alpha-IPM synthase/homocitrate synthase family. LeuA type 2 subfamily. In terms of assembly, homodimer. Requires Mg(2+) as cofactor.

Its subcellular location is the cytoplasm. The catalysed reaction is 3-methyl-2-oxobutanoate + acetyl-CoA + H2O = (2S)-2-isopropylmalate + CoA + H(+). It functions in the pathway amino-acid biosynthesis; L-leucine biosynthesis; L-leucine from 3-methyl-2-oxobutanoate: step 1/4. In terms of biological role, catalyzes the condensation of the acetyl group of acetyl-CoA with 3-methyl-2-oxobutanoate (2-ketoisovalerate) to form 3-carboxy-3-hydroxy-4-methylpentanoate (2-isopropylmalate). The polypeptide is 2-isopropylmalate synthase (Pseudomonas putida (strain GB-1)).